Reading from the N-terminus, the 126-residue chain is Fluoride-specific ion channel FluC (126 aa).

A run of 4 helical transmembrane segments spans residues 4-24 (LLLVCLGGALGSGARYLTSAW), 36-56 (GTLLVNVSGSFLLAGIMTASL), 67-85 (LFLAAGVMGGFTTYSSFNY), and 101-121 (AYLLATVLGCLAAAFAATLLV). Positions 75 and 78 each coordinate Na(+).

The protein belongs to the fluoride channel Fluc/FEX (TC 1.A.43) family.

It is found in the cell inner membrane. The catalysed reaction is fluoride(in) = fluoride(out). Its activity is regulated as follows. Na(+) is not transported, but it plays an essential structural role and its presence is essential for fluoride channel function. Functionally, fluoride-specific ion channel. Important for reducing fluoride concentration in the cell, thus reducing its toxicity. The protein is Fluoride-specific ion channel FluC of Anaeromyxobacter dehalogenans (strain 2CP-1 / ATCC BAA-258).